A 321-amino-acid chain; its full sequence is Oxidoreductase P35 (321 aa).

It belongs to the Gfo/Idh/MocA family.

It localises to the cell surface. Functionally, oxidoreductase that may be involved in ulvan degradation. Ulvan is the main polysaccharide component of the Ulvales (green seaweed) cell wall. It is composed of disaccharide building blocks comprising 3-sulfated rhamnose (Rha3S) linked to D-glucuronic acid (GlcA), L-iduronic acid (IduA), or D-xylose (Xyl). This is Oxidoreductase P35 from Formosa agariphila (strain DSM 15362 / KCTC 12365 / LMG 23005 / KMM 3901 / M-2Alg 35-1).